Here is a 417-residue protein sequence, read N- to C-terminus: Lissencephaly-1 homolog (417 aa).

One can recognise a LisH domain in the interval 7–39 (QKEELNRAIADYLFANGYVKALNAFREESQLAG). Positions 54 to 86 (TSVIRLQKKVMDLEAKLNEAEKEFQSMQNAIGF) form a coiled coil. WD repeat units follow at residues 120–159 (GHRS…FEHT), 162–203 (GHTD…KTLT), 204–243 (GHDH…CTKT), 246–285 (GHTE…CQVV), 288–340 (GHEH…CLFV), 343–382 (GHDN…CHKT), and 385–417 (AHSH…WDCR).

This sequence belongs to the WD repeat LIS1/nudF family.

Its subcellular location is the cytoplasm. It localises to the cytoskeleton. The protein localises to the microtubule organizing center. It is found in the centrosome. In terms of biological role, positively regulates the activity of the minus-end directed microtubule motor protein dynein. May enhance dynein-mediated microtubule sliding by targeting dynein to the microtubule plus end. Required for several dynein- and microtubule-dependent processes. This Schistosoma mansoni (Blood fluke) protein is Lissencephaly-1 homolog.